Consider the following 171-residue polypeptide: Transcription factor pcr1 (171 aa).

Residues 10–73 enclose the bZIP domain; it reads DEKRRRILER…FRLKSQLLAH (64 aa). The tract at residues 12–51 is basic motif; the sequence is KRRRILERNRIAASKFRQKKKEWIKELEQTANAAFEQSKR. Residues 52–66 form a leucine-zipper region; sequence LQLLLSQLQQEAFRL. Positions 125-171 are disordered; the sequence is QMHPSLQGLPPNQHPQMPPSSQQPNSDDVQQHMFSAAGLPRSLGGPI. Low complexity predominate over residues 143-152; that stretch reads PSSQQPNSDD.

This sequence belongs to the bZIP family. Heterodimer of pcr1/mts2 and atf1/mts1.

It is found in the nucleus. In terms of biological role, involved in regulation of gene expression for sexual development. Binds and activates CRE sites (cAMP-response elements, also known as M26 meiotic recombination hotspots). In Schizosaccharomyces pombe (strain 972 / ATCC 24843) (Fission yeast), this protein is Transcription factor pcr1 (pcr1).